We begin with the raw amino-acid sequence, 348 residues long: MSDRLTLLRPDDWHIHLRDGAALANTVGDAARTFGRAIVMPNLVPPVRNAAEADAYRQRILAARPAASRFEPLMVLYLTDRTSAEEIRTAKASGFVHAAKLYPAGATTNSDSGVTRIDNIFEALEAMAEVGMPLLVHGEVTRAEVDVFDREKQFIDEHLRRVVERFPTLKVVFEHITTGDAAQFVREAPANVGATITAHHLLYNRNHMLVGGIRPHFYCLPILKRNTHQEALLDAAVSGNPKFFLGTDSAPHARHAKETACGCAGCYSAYAAIELYAEAFEQRNALDKLEGFASLHGPDFYGLPRNTDRITLVREEWQAPASLPFGDFDVVPLRAGETLRWKLLEAGA.

Residues His14 and His16 each coordinate Zn(2+). Residues 16-18 (HLR) and Asn42 each bind substrate. The Zn(2+) site is built by Lys100, His137, and His175. The residue at position 100 (Lys100) is an N6-carboxylysine. His137 contacts substrate. A substrate-binding site is contributed by Leu220. Position 248 (Asp248) interacts with Zn(2+). The active site involves Asp248. Positions 252 and 264 each coordinate substrate.

The protein belongs to the metallo-dependent hydrolases superfamily. DHOase family. Class II DHOase subfamily. As to quaternary structure, homodimer. Zn(2+) is required as a cofactor.

It carries out the reaction (S)-dihydroorotate + H2O = N-carbamoyl-L-aspartate + H(+). It functions in the pathway pyrimidine metabolism; UMP biosynthesis via de novo pathway; (S)-dihydroorotate from bicarbonate: step 3/3. Its function is as follows. Catalyzes the reversible cyclization of carbamoyl aspartate to dihydroorotate. The sequence is that of Dihydroorotase from Pseudomonas aeruginosa (strain UCBPP-PA14).